We begin with the raw amino-acid sequence, 66 residues long: DNA-directed RNA polymerase subunit Rpo10 (66 aa).

Zn(2+)-binding residues include C7, C10, C44, and C45.

Belongs to the archaeal Rpo10/eukaryotic RPB10 RNA polymerase subunit family. Part of the RNA polymerase complex. It depends on Zn(2+) as a cofactor.

Its subcellular location is the cytoplasm. The enzyme catalyses RNA(n) + a ribonucleoside 5'-triphosphate = RNA(n+1) + diphosphate. DNA-dependent RNA polymerase (RNAP) catalyzes the transcription of DNA into RNA using the four ribonucleoside triphosphates as substrates. This Staphylothermus marinus (strain ATCC 43588 / DSM 3639 / JCM 9404 / F1) protein is DNA-directed RNA polymerase subunit Rpo10.